The chain runs to 192 residues: Phosphoheptose isomerase (192 aa).

One can recognise an SIS domain in the interval 34 to 192 (VVDAYKAGNK…VERELFVKGK (159 aa)). A substrate-binding site is contributed by 49–51 (NGG). Zn(2+) contacts are provided by His-58 and Glu-62. Residues Glu-62, 91-92 (ND), 117-119 (STS), Ser-122, and Gln-169 contribute to the substrate site. Zn(2+) is bound by residues Gln-169 and His-177.

Belongs to the SIS family. GmhA subfamily. As to quaternary structure, homotetramer. Requires Zn(2+) as cofactor.

It localises to the cytoplasm. It catalyses the reaction 2 D-sedoheptulose 7-phosphate = D-glycero-alpha-D-manno-heptose 7-phosphate + D-glycero-beta-D-manno-heptose 7-phosphate. Its pathway is carbohydrate biosynthesis; D-glycero-D-manno-heptose 7-phosphate biosynthesis; D-glycero-alpha-D-manno-heptose 7-phosphate and D-glycero-beta-D-manno-heptose 7-phosphate from sedoheptulose 7-phosphate: step 1/1. Functionally, catalyzes the isomerization of sedoheptulose 7-phosphate in D-glycero-D-manno-heptose 7-phosphate. The polypeptide is Phosphoheptose isomerase (Citrifermentans bemidjiense (strain ATCC BAA-1014 / DSM 16622 / JCM 12645 / Bem) (Geobacter bemidjiensis)).